Here is a 713-residue protein sequence, read N- to C-terminus: Nucleolin (713 aa).

Residues 1-309 (MVKLAKAGKT…QKIEGSEPTT (309 aa)) are disordered. Residues Lys9, Lys15, and Lys16 each carry the N6-acetyllysine modification. Over residues 24–46 (VEEDSEDEEMSEDEDDSSGEEEV) the composition is skewed to acidic residues. Ser28, Ser34, Ser40, and Ser41 each carry phosphoserine. Residues 56–111 (ATTTPAKKVVVSQTKKAAVPTPAKKAAVTPGKKAAATPAKKAVTPAKVVPTPGKKG) show a composition bias toward low complexity. The stretch at 58–65 (TTPAKKVV) is repeat 1. The tract at residues 58–135 (TTPAKKVVVS…GAVTPAKGAK (78 aa)) is 8 X 8 AA tandem repeats of X-T-P-X-K-K-X-X. Ser67 carries the post-translational modification Phosphoserine. 4 positions are modified to phosphothreonine: Thr69, Thr76, Thr84, and Thr92. 3 repeat units span residues 75–82 (PTPAKKAA), 83–90 (VTPGKKAA), and 91–98 (ATPAKKAV). The residue at position 96 (Lys96) is an N6-acetyllysine. Position 99 is a phosphothreonine (Thr99). The stretch at 99–104 (TPAKVV) is one 5; truncated repeat. The residue at position 102 (Lys102) is an N6-acetyllysine. Residues 105-112 (PTPGKKGA) form repeat 6. Residue Thr106 is modified to Phosphothreonine. Lys109 and Lys116 each carry N6-acetyllysine. 2 tandem repeats follow at residues 120–127 (PTPGKKGA) and 128–135 (VTPAKGAK). Position 121 is a phosphothreonine (Thr121). Lys124 carries the N6-acetyllysine modification. Ser145 and Ser157 each carry phosphoserine. Over residues 145-168 (SDEDEDEEDEDDSDEDEDEEDEFE) the composition is skewed to acidic residues. Positions 169–186 (PPVVKGVKPAKAAPAAPA) are enriched in low complexity. Residues Ser187 and Ser213 each carry the phosphoserine modification. Residues 187-218 (SEDEDEEDDDDEDDDDDDEEEEEEDDSEEEVM) are compositionally biased toward acidic residues. Thr221 carries the phosphothreonine modification. The segment covering 242–275 (EEEEDDEDDEDEEEDEDEEDEEDDEDEDEEEEEE) has biased composition (acidic residues). Over residues 288-304 (MTKQKEAPEAKKQKIEG) the composition is skewed to basic and acidic residues. Residue Lys301 forms a Glycyl lysine isopeptide (Lys-Gly) (interchain with G-Cter in SUMO1); alternate linkage. Lys301 is covalently cross-linked (Glycyl lysine isopeptide (Lys-Gly) (interchain with G-Cter in SUMO2); alternate). Ser305 is modified (phosphoserine). RRM domains follow at residues 311 to 387 (FNLF…KPKG) and 397 to 470 (RTLL…YTGE). N6-acetyllysine is present on Lys322. A Glycyl lysine isopeptide (Lys-Gly) (interchain with G-Cter in SUMO1); alternate cross-link involves residue Lys328. Lys328 participates in a covalent cross-link: Glycyl lysine isopeptide (Lys-Gly) (interchain with G-Cter in SUMO2); alternate. An N6-acetyllysine modification is found at Lys352. Ser360 bears the Phosphoserine mark. Residue Thr371 is modified to Phosphothreonine. Residue Lys374 forms a Glycyl lysine isopeptide (Lys-Gly) (interchain with G-Cter in SUMO2) linkage. Residue Lys381 forms a Glycyl lysine isopeptide (Lys-Gly) (interchain with G-Cter in SUMO2); alternate linkage. N6-acetyllysine; alternate is present on Lys381. N6-acetyllysine is present on Lys402. The residue at position 405 (Ser405) is a Phosphoserine. Thr409 is subject to Phosphothreonine. Lys448 bears the N6-acetyllysine mark. A phosphoserine mark is found at Ser462 and Ser464. Residues Lys471 and Lys480 each carry the N6-acetyllysine modification. The 75-residue stretch at 489-563 (KTLVLSNLSY…RTIRLELQGP (75 aa)) folds into the RRM 3 domain. A Glycyl lysine isopeptide (Lys-Gly) (interchain with G-Cter in SUMO2); alternate cross-link involves residue Lys516. Lys516 is modified (N6-acetyllysine; alternate). Lys524 bears the N6-acetyllysine mark. Ser566 carries the post-translational modification Phosphoserine. Residue Lys575 is modified to N6-acetyllysine. The RRM 4 domain maps to 575-650 (KTLFVKGLSE…NKVTLDWAKP (76 aa)). Residue Lys580 forms a Glycyl lysine isopeptide (Lys-Gly) (interchain with G-Cter in SUMO2); alternate linkage. N6-acetyllysine; alternate is present on Lys580. Ser583 is subject to Phosphoserine. Lys592 is covalently cross-linked (Glycyl lysine isopeptide (Lys-Gly) (interchain with G-Cter in SUMO1); alternate). Residue Lys592 forms a Glycyl lysine isopeptide (Lys-Gly) (interchain with G-Cter in SUMO2); alternate linkage. Phosphoserine is present on residues Ser594 and Ser622. A Glycyl lysine isopeptide (Lys-Gly) (interchain with G-Cter in SUMO2) cross-link involves residue Lys627. A disordered region spans residues 645–713 (LDWAKPKGEG…KPQGKKTKFE (69 aa)). N6-acetyllysine is present on Lys649. Over residues 653–702 (EGGFGGRGGGRGGFGGRGGGRGGRGGFGGRGRGGFGGRGGFRGGRGGGGD) the composition is skewed to gly residues. Arg659, Arg663, Arg669, Arg673, Arg676, Arg682, Arg684, Arg690, and Arg694 each carry asymmetric dimethylarginine. The residue at position 697 (Arg697) is an Asymmetric dimethylarginine; alternate. Arg697 carries the omega-N-methylarginine; alternate modification.

Identified in a IGF2BP1-dependent mRNP granule complex containing untranslated mRNAs. Component of the SWAP complex that consists of NPM1, NCL/nucleolin, PARP1 and SWAP70. Component of a complex which is at least composed of HTATSF1/Tat-SF1, the P-TEFb complex components CDK9 and CCNT1, RNA polymerase II, SUPT5H, and NCL/nucleolin. Interacts with AICDA. Interacts with APTX. Interacts with C1QBP. Interacts with ERBB4. Interacts (via C-terminus) with FMR1 isoform 6 (via N-terminus). Interacts with GZF1; this interaction is important for nucleolar localization of GZF1. Interacts with NSUN2. Interacts with NVL. Interacts (via N-terminus domain) with SETX. Interacts (via RRM1 and C-terminal RRM4/Arg/Gly-rich domains) with TERT; the interaction is important for nucleolar localization of TERT. Interacts with WDR46. Interacts with ZFP36. Interacts with LRRC34. Interacts with RRP1B. Interacts with HNRNPU; this interaction occurs during mitosis. Interacts with RIOK1; RIOK1 recruits NCL to PRMT5 for symmetrically methylation. Interacts with ZBTB7B. Interacts with MDK; this interaction promotes NCL clustering and lateral movements of this complex into lipid rafts leading to MDK internalization. Interacts with HDGF. Interacts with ALKBH2. Interacts with IGFBP5; this interaction is necessary for IGFBP5 localization to the nucleus. Interacts with DDX24 (when ubiquitinated); this interaction may be important during ribosome biogenesis. Post-translationally, some glutamate residues are glycylated by TTLL8. This modification occurs exclusively on glutamate residues and results in a glycine chain on the gamma-carboxyl group. In terms of processing, symmetrically methylated by PRMT5.

The protein resides in the nucleus. It is found in the nucleolus. It localises to the cytoplasm. Its function is as follows. Nucleolin is the major nucleolar protein of growing eukaryotic cells. It is found associated with intranucleolar chromatin and pre-ribosomal particles. It induces chromatin decondensation by binding to histone H1. It is thought to play a role in pre-rRNA transcription and ribosome assembly. May play a role in the process of transcriptional elongation. Binds RNA oligonucleotides with 5'-UUAGGG-3' repeats more tightly than the telomeric single-stranded DNA 5'-TTAGGG-3' repeats. The chain is Nucleolin (Ncl) from Rattus norvegicus (Rat).